The chain runs to 69 residues: MRRQKRDMFERAYLKGYRAGVSGRSKDLCPAANPQMRQEWINGWRDGRADHWDGYTGVSGIHRSPGIAS.

It belongs to the ribosome modulation factor family.

The protein resides in the cytoplasm. During stationary phase, converts 70S ribosomes to an inactive dimeric form (100S ribosomes). The polypeptide is Ribosome modulation factor (Hahella chejuensis (strain KCTC 2396)).